Reading from the N-terminus, the 462-residue chain is ATP synthase subunit beta (462 aa).

152–159 (GGAGVGKT) contributes to the ATP binding site.

It belongs to the ATPase alpha/beta chains family. In terms of assembly, F-type ATPases have 2 components, CF(1) - the catalytic core - and CF(0) - the membrane proton channel. CF(1) has five subunits: alpha(3), beta(3), gamma(1), delta(1), epsilon(1). CF(0) has three main subunits: a(1), b(2) and c(9-12). The alpha and beta chains form an alternating ring which encloses part of the gamma chain. CF(1) is attached to CF(0) by a central stalk formed by the gamma and epsilon chains, while a peripheral stalk is formed by the delta and b chains.

It localises to the cell inner membrane. The catalysed reaction is ATP + H2O + 4 H(+)(in) = ADP + phosphate + 5 H(+)(out). Produces ATP from ADP in the presence of a proton gradient across the membrane. The catalytic sites are hosted primarily by the beta subunits. The sequence is that of ATP synthase subunit beta from Blochmanniella pennsylvanica (strain BPEN).